Here is a 581-residue protein sequence, read N- to C-terminus: Adenine deaminase (581 aa).

This sequence belongs to the metallo-dependent hydrolases superfamily. Adenine deaminase family. Requires Mn(2+) as cofactor.

The catalysed reaction is adenine + H2O + H(+) = hypoxanthine + NH4(+). The protein is Adenine deaminase of Lysinibacillus sphaericus (strain C3-41).